A 341-amino-acid chain; its full sequence is Anthranilate phosphoribosyltransferase (341 aa).

5-phospho-alpha-D-ribose 1-diphosphate-binding positions include Gly81, 84 to 85, Thr89, 91 to 94, 109 to 117, and Ser121; these read GD, NIST, and KHGSRSVSG. Residue Gly81 coordinates anthranilate. Position 93 (Ser93) interacts with Mg(2+). Arg167 is an anthranilate binding site. Asp226 and Glu227 together coordinate Mg(2+).

Belongs to the anthranilate phosphoribosyltransferase family. Homodimer. Mg(2+) is required as a cofactor.

It catalyses the reaction N-(5-phospho-beta-D-ribosyl)anthranilate + diphosphate = 5-phospho-alpha-D-ribose 1-diphosphate + anthranilate. It participates in amino-acid biosynthesis; L-tryptophan biosynthesis; L-tryptophan from chorismate: step 2/5. Functionally, catalyzes the transfer of the phosphoribosyl group of 5-phosphorylribose-1-pyrophosphate (PRPP) to anthranilate to yield N-(5'-phosphoribosyl)-anthranilate (PRA). This Methylococcus capsulatus (strain ATCC 33009 / NCIMB 11132 / Bath) protein is Anthranilate phosphoribosyltransferase.